The primary structure comprises 185 residues: NADH-dependent FMN reductase AsuE2 (185 aa).

The span at 1–13 shows a compositional bias: low complexity; it reads MSTHTARRAGATA. The disordered stretch occupies residues 1-24; that stretch reads MSTHTARRAGATAGHDRDRGTEPG. The span at 14 to 24 shows a compositional bias: basic and acidic residues; that stretch reads GHDRDRGTEPG.

This sequence belongs to the non-flavoprotein flavin reductase family. In terms of assembly, does not interact with AsuE1, suggesting a possible transient interaction between the two enzymes instead of formation of a stable complex.

It carries out the reaction FMNH2 + NAD(+) = FMN + NADH + 2 H(+). Its pathway is antibiotic biosynthesis. Functionally, involved in the biosynthesis of the antibiotic asukamycin. When flavin concentration is low, AsuE2 assists the protoasukamycin 4-monooxygenase AsuE1 by providing a reduced form of flavin, enhancing AsuE1 activity. This is NADH-dependent FMN reductase AsuE2 from Streptomyces nodosus subsp. asukaensis.